A 389-amino-acid polypeptide reads, in one-letter code: tRNA(Met) cytidine acetate ligase (389 aa).

ATP-binding positions include 8–21 (IAEFNPFHKGHEYL), Gly97, Asn153, and Arg176.

This sequence belongs to the TmcAL family.

It is found in the cytoplasm. It carries out the reaction cytidine(34) in elongator tRNA(Met) + acetate + ATP = N(4)-acetylcytidine(34) in elongator tRNA(Met) + AMP + diphosphate. Catalyzes the formation of N(4)-acetylcytidine (ac(4)C) at the wobble position of elongator tRNA(Met), using acetate and ATP as substrates. First activates an acetate ion to form acetyladenylate (Ac-AMP) and then transfers the acetyl group to tRNA to form ac(4)C34. In Lactococcus lactis subsp. lactis (strain IL1403) (Streptococcus lactis), this protein is tRNA(Met) cytidine acetate ligase.